The chain runs to 809 residues: Quinate/shikimate dehydrogenase (quinone) (809 aa).

5 helical membrane-spanning segments follow: residues 14 to 34, 41 to 61, 68 to 88, 90 to 110, and 127 to 147; these read VWCF…VIGG, GGSW…FFMF, VWLY…DAGF, FWPL…VMLT, and AYVI…GMFI.

The protein belongs to the bacterial PQQ dehydrogenase family. It depends on pyrroloquinoline quinone as a cofactor.

The protein resides in the cell membrane. The enzyme catalyses L-quinate + a quinone = 3-dehydroquinate + a quinol. The catalysed reaction is shikimate + a quinone = 3-dehydroshikimate + a quinol. The protein operates within aromatic compound metabolism; 3,4-dihydroxybenzoate biosynthesis; 3-dehydroquinate from D-quinate (PQQ route): step 1/1. Can act either on quinate or on shikimate. The protein is Quinate/shikimate dehydrogenase (quinone) (quiA) of Acinetobacter baylyi (strain ATCC 33305 / BD413 / ADP1).